The following is a 514-amino-acid chain: Bifunctional purine biosynthesis protein PurH (514 aa).

Positions 1-142 (MLALLSVSDK…KNFRHVSVVV (142 aa)) constitute an MGS-like domain.

This sequence belongs to the PurH family.

The catalysed reaction is (6R)-10-formyltetrahydrofolate + 5-amino-1-(5-phospho-beta-D-ribosyl)imidazole-4-carboxamide = 5-formamido-1-(5-phospho-D-ribosyl)imidazole-4-carboxamide + (6S)-5,6,7,8-tetrahydrofolate. It catalyses the reaction IMP + H2O = 5-formamido-1-(5-phospho-D-ribosyl)imidazole-4-carboxamide. It participates in purine metabolism; IMP biosynthesis via de novo pathway; 5-formamido-1-(5-phospho-D-ribosyl)imidazole-4-carboxamide from 5-amino-1-(5-phospho-D-ribosyl)imidazole-4-carboxamide (10-formyl THF route): step 1/1. The protein operates within purine metabolism; IMP biosynthesis via de novo pathway; IMP from 5-formamido-1-(5-phospho-D-ribosyl)imidazole-4-carboxamide: step 1/1. This Myxococcus xanthus (strain DK1622) protein is Bifunctional purine biosynthesis protein PurH.